Consider the following 356-residue polypeptide: MNIPHYSLETLAHLVQGELFGDEHFNLSGLASLEQAQSHHISFVNGEKYVEAAKQSKAGALIVTSAFKDQLPASQNYIVVKNPYLAFAQLTHVFEKKMTQRGIESTAKIHPSAMIADNAYIGHYVIIGAECVVGENTVILAHSFLGDNVEIGRDGFVESNVSLLQGTKIKDRVRIHANTVIGSEGFGFAPYQGKWHRIVQLGTVQIGHDVRIGSNCSIDRGALDDTIIEDGVIIDNLVQIAHNVRIGSNTAIAAKCGIAGSTVIGKNCILAGACGVVGHITITDNVTLTGMSMVTKSISEAGTYSSGTALMENNQWKRTIVRFRQLADVPLTQIMKRLDHIQTQIESLESTFKLRK.

Histidine 242 acts as the Proton acceptor in catalysis.

This sequence belongs to the transferase hexapeptide repeat family. LpxD subfamily. As to quaternary structure, homotrimer.

The enzyme catalyses a UDP-3-O-[(3R)-3-hydroxyacyl]-alpha-D-glucosamine + a (3R)-hydroxyacyl-[ACP] = a UDP-2-N,3-O-bis[(3R)-3-hydroxyacyl]-alpha-D-glucosamine + holo-[ACP] + H(+). It functions in the pathway bacterial outer membrane biogenesis; LPS lipid A biosynthesis. Catalyzes the N-acylation of UDP-3-O-acylglucosamine using 3-hydroxyacyl-ACP as the acyl donor. Is involved in the biosynthesis of lipid A, a phosphorylated glycolipid that anchors the lipopolysaccharide to the outer membrane of the cell. This is UDP-3-O-acylglucosamine N-acyltransferase from Acinetobacter baylyi (strain ATCC 33305 / BD413 / ADP1).